A 303-amino-acid chain; its full sequence is Putative AraC-like transcription regulator (303 aa).

The region spanning 202 to 300 is the HTH araC/xylS-type domain; that stretch reads ASALTFLHRD…GMNPGDYRKH (99 aa). 2 consecutive DNA-binding regions (H-T-H motif) follow at residues 219–240 and 267–290; these read AELA…KATV and LAAI…KRVL.

This chain is Putative AraC-like transcription regulator, found in Streptomyces antibioticus.